Here is a 114-residue protein sequence, read N- to C-terminus: Kininogen-2 (114 aa).

An N-terminal signal peptide occupies residues 1–23 (MRLWFCLSFFIVLCLEHFPGTLA). Residues 35–45 (TRLHGHHKPSR) show a composition bias toward basic residues. A disordered region spans residues 35–114 (TRLHGHHKPS…QIPGLGPLRG (80 aa)). Residues 65 to 80 (PESEEKTEQFLRDLPK) are compositionally biased toward basic and acidic residues. Position 113 is an arginine amide (Arg113).

Belongs to the bradykinin-related peptide family. In terms of tissue distribution, expressed by the skin glands.

The protein resides in the secreted. Potent vasodilator. Binds B1 (BDKRB1) and B2 (BDKRB2) bradykinin receptors. The sequence is that of Kininogen-2 from Bombina maxima (Giant fire-bellied toad).